A 143-amino-acid chain; its full sequence is Large-conductance mechanosensitive channel (143 aa).

A run of 3 helical transmembrane segments spans residues 16–36 (VMDL…TNSL), 40–60 (IIMP…NMFI), and 87–107 (GSFI…FMMV).

Belongs to the MscL family. Homopentamer.

It localises to the cell inner membrane. Its function is as follows. Channel that opens in response to stretch forces in the membrane lipid bilayer. May participate in the regulation of osmotic pressure changes within the cell. The chain is Large-conductance mechanosensitive channel from Psychrobacter sp. (strain PRwf-1).